A 257-amino-acid polypeptide reads, in one-letter code: MTVAVRVIPCLDVDAGRVVKGVNFQNLRDAGDPVELAATYDAQGADELTFLDVTASTGDRGTMIDVVTRTAEQIFIPLTVGGGVRTVEDVDRLLRAGADKVSVNTAAIARPEVLREMSERFGSQCIVLSVDARTVPDGQPDTPSGWEVTTHGGKRGTGIDAVEWAERGAELGVGEILLNSMDADGTKTGFDLPMIRAVRAAVSIPVIASGGAGAVEHFAPAVQAGADAVLAASVFHFGDLTIGQVKDSLRDAHLVVR.

Catalysis depends on residues aspartate 12 and aspartate 131.

This sequence belongs to the HisA/HisF family. In terms of assembly, heterodimer of HisH and HisF.

It is found in the cytoplasm. The catalysed reaction is 5-[(5-phospho-1-deoxy-D-ribulos-1-ylimino)methylamino]-1-(5-phospho-beta-D-ribosyl)imidazole-4-carboxamide + L-glutamine = D-erythro-1-(imidazol-4-yl)glycerol 3-phosphate + 5-amino-1-(5-phospho-beta-D-ribosyl)imidazole-4-carboxamide + L-glutamate + H(+). It participates in amino-acid biosynthesis; L-histidine biosynthesis; L-histidine from 5-phospho-alpha-D-ribose 1-diphosphate: step 5/9. Its function is as follows. IGPS catalyzes the conversion of PRFAR and glutamine to IGP, AICAR and glutamate. The HisF subunit catalyzes the cyclization activity that produces IGP and AICAR from PRFAR using the ammonia provided by the HisH subunit. The chain is Imidazole glycerol phosphate synthase subunit HisF from Nocardia farcinica (strain IFM 10152).